The sequence spans 277 residues: S-formylglutathione hydrolase FrmB (277 aa).

Residues serine 145, aspartate 221, and histidine 254 each act as charge relay system in the active site.

This sequence belongs to the esterase D family.

The enzyme catalyses S-formylglutathione + H2O = formate + glutathione + H(+). Serine hydrolase involved in the detoxification of formaldehyde. Hydrolyzes S-formylglutathione to glutathione and formate. In Escherichia coli O6:K15:H31 (strain 536 / UPEC), this protein is S-formylglutathione hydrolase FrmB (frmB).